A 513-amino-acid chain; its full sequence is Histidine ammonia-lyase (513 aa).

Positions 143–145 (ASG) form a cross-link, 5-imidazolinone (Ala-Gly). Serine 144 is subject to 2,3-didehydroalanine (Ser).

It belongs to the PAL/histidase family. In terms of processing, contains an active site 4-methylidene-imidazol-5-one (MIO), which is formed autocatalytically by cyclization and dehydration of residues Ala-Ser-Gly.

It localises to the cytoplasm. The enzyme catalyses L-histidine = trans-urocanate + NH4(+). It functions in the pathway amino-acid degradation; L-histidine degradation into L-glutamate; N-formimidoyl-L-glutamate from L-histidine: step 1/3. This chain is Histidine ammonia-lyase, found in Xanthomonas campestris pv. campestris (strain B100).